The sequence spans 196 residues: Translation machinery-associated protein 22 (196 aa).

In terms of domain architecture, SUI1 spans 97 to 168; the sequence is VIVKREARTK…EVVAYIHSLL (72 aa).

This sequence belongs to the DENR family. In terms of assembly, interacts with the 40S ribosomal subunit.

It is found in the cytoplasm. This Candida glabrata (strain ATCC 2001 / BCRC 20586 / JCM 3761 / NBRC 0622 / NRRL Y-65 / CBS 138) (Yeast) protein is Translation machinery-associated protein 22 (TMA22).